Here is a 366-residue protein sequence, read N- to C-terminus: MASAARSASRAFLRSTPTTSSFRPAVRAARFALPAQGFRAAGRRGYASEANSGKSSSNVFLWAGLAVAGGAGAYLYLNGSDSVTSKTFVPGKEDYQKVYDAIARRLADETDYDDGSYGPVLVRLAWHASGTYDKETGTGGSNGATMRFAPESDHGANAGLKIARDFLEPIKAQFPWISYSDLWTLAGACAIQELGGPTIPWRPGRQDKDVAACTPDGRLPDASKDQRHIRDIFYRMGFNDQEIVALIGAHALGRAHPDRSGYDGPWDFSPTVFTNEFFRLLVDEKWQNRKWNGPAQFTDKTTKTLMMLPADLALIKDKEFKKHVERYARDSDAFFKDFSDAFVKLLELGVPFTSKAEDRYVFKTSE.

The transit peptide at 1-46 (MASAARSASRAFLRSTPTTSSFRPAVRAARFALPAQGFRAAGRRGY) directs the protein to the mitochondrion. His-127 acts as the Proton acceptor in catalysis. Residue His-250 coordinates heme b. Trp-266 serves as the catalytic Tryptophan radical intermediate.

This sequence belongs to the peroxidase family. Cytochrome c peroxidase subfamily. As to quaternary structure, forms a one-to-one complex with cytochrome c. Requires heme b as cofactor.

It localises to the mitochondrion matrix. It is found in the mitochondrion intermembrane space. It carries out the reaction 2 Fe(II)-[cytochrome c] + H2O2 + 2 H(+) = 2 Fe(III)-[cytochrome c] + 2 H2O. Functionally, destroys radicals which are normally produced within the cells and which are toxic to biological systems. In Aspergillus fumigatus (strain ATCC MYA-4609 / CBS 101355 / FGSC A1100 / Af293) (Neosartorya fumigata), this protein is Cytochrome c peroxidase, mitochondrial (ccp1).